A 598-amino-acid chain; its full sequence is Elongation factor 4 (598 aa).

Residues 4–186 enclose the tr-type G domain; sequence SHIRNFAIIA…AIVSRLPAPS (183 aa). Residues 16–21 and 133–136 contribute to the GTP site; these read DHGKST and NKID.

This sequence belongs to the TRAFAC class translation factor GTPase superfamily. Classic translation factor GTPase family. LepA subfamily.

It is found in the cell inner membrane. The enzyme catalyses GTP + H2O = GDP + phosphate + H(+). Functionally, required for accurate and efficient protein synthesis under certain stress conditions. May act as a fidelity factor of the translation reaction, by catalyzing a one-codon backward translocation of tRNAs on improperly translocated ribosomes. Back-translocation proceeds from a post-translocation (POST) complex to a pre-translocation (PRE) complex, thus giving elongation factor G a second chance to translocate the tRNAs correctly. Binds to ribosomes in a GTP-dependent manner. This chain is Elongation factor 4, found in Ehrlichia chaffeensis (strain ATCC CRL-10679 / Arkansas).